We begin with the raw amino-acid sequence, 217 residues long: Peroxiredoxin (217 aa).

The region spanning 2-159 is the Thioredoxin domain; that stretch reads AVIGEKFPDV…VVRLVKALQT (158 aa). The Cysteine sulfenic acid (-SOH) intermediate role is filled by Cys46. Residue Arg122 participates in substrate binding.

This sequence belongs to the peroxiredoxin family. Prx6 subfamily. In terms of assembly, homodecamer. Pentamer of dimers that assemble into a ring structure.

The protein localises to the cytoplasm. It catalyses the reaction a hydroperoxide + [thioredoxin]-dithiol = an alcohol + [thioredoxin]-disulfide + H2O. Thiol-specific peroxidase that catalyzes the reduction of hydrogen peroxide and organic hydroperoxides to water and alcohols, respectively. Plays a role in cell protection against oxidative stress by detoxifying peroxides. The chain is Peroxiredoxin from Methanococcus vannielii (strain ATCC 35089 / DSM 1224 / JCM 13029 / OCM 148 / SB).